The primary structure comprises 187 residues: Chlorobenzene dioxygenase subunit beta (187 aa).

The protein belongs to the bacterial ring-hydroxylating dioxygenase beta subunit family. This dioxygenase system consists of four proteins: the two subunits of the oxygenase component (TecA1 and TecA2), a ferredoxin (TecA3) and a ferredoxin reductase (TecA4).

The enzyme catalyses chlorobenzene + NADH + O2 + H(+) = (1R,2R)-3-chlorocyclohexa-3,5-diene-1,2-diol + NAD(+). The protein operates within aromatic compound metabolism. Its function is as follows. Part of the oxygenase component of the chlorobenzene dioxygenase system that catalyzes the dihydroxylation of a range of aromatic compounds, including chlorinated benzenes and toluenes, and dinuclear aromatics such as biphenyl and dibenzo-p-dioxin. The beta subunit is not directly involved in the control of substrate specificity. The sequence is that of Chlorobenzene dioxygenase subunit beta from Cupriavidus sp. (strain PS12).